Here is a 416-residue protein sequence, read N- to C-terminus: Photosystem II stability/assembly factor HCF136, chloroplastic (416 aa).

Residues 1–36 (MATTASLHLHLHLLLSSSRRRCRLLVPRAHTDSIST) constitute a chloroplast transit peptide. The N-terminal 31 residues, 37 to 67 (GRRRFIADTATASAAAAVGPLVLPRTPLARA), are a transit peptide targeting the thylakoid.

This sequence belongs to the Ycf48 family.

It localises to the plastid. The protein resides in the chloroplast thylakoid lumen. Its function is as follows. Essential for photosystem II (PSII) biogenesis; required for assembly of an early intermediate in PSII assembly that includes D2 (psbD) and cytochrome b559. The sequence is that of Photosystem II stability/assembly factor HCF136, chloroplastic (HCF136) from Oryza sativa subsp. japonica (Rice).